A 573-amino-acid polypeptide reads, in one-letter code: 2-isopropylmalate synthase (573 aa).

Residues 37-314 (PRWLSTDLRD…DPQIDFSDID (278 aa)) enclose the Pyruvate carboxyltransferase domain. Residues aspartate 46, histidine 253, histidine 255, and asparagine 289 each contribute to the Mg(2+) site. The interval 456–573 (NPDNPWGRIQ…VVSAVNRATR (118 aa)) is regulatory domain.

Belongs to the alpha-IPM synthase/homocitrate synthase family. LeuA type 2 subfamily. In terms of assembly, homodimer. Mg(2+) is required as a cofactor.

Its subcellular location is the cytoplasm. The enzyme catalyses 3-methyl-2-oxobutanoate + acetyl-CoA + H2O = (2S)-2-isopropylmalate + CoA + H(+). Its pathway is amino-acid biosynthesis; L-leucine biosynthesis; L-leucine from 3-methyl-2-oxobutanoate: step 1/4. In terms of biological role, catalyzes the condensation of the acetyl group of acetyl-CoA with 3-methyl-2-oxobutanoate (2-ketoisovalerate) to form 3-carboxy-3-hydroxy-4-methylpentanoate (2-isopropylmalate). The sequence is that of 2-isopropylmalate synthase from Streptomyces coelicolor (strain ATCC BAA-471 / A3(2) / M145).